The sequence spans 224 residues: Probable Brix domain-containing ribosomal biogenesis protein (224 aa).

Residues 1–196 form the Brix domain; it reads MMLITTSHRP…IWIMEDGRRW (196 aa).

Functionally, probably involved in the biogenesis of the ribosome. The polypeptide is Probable Brix domain-containing ribosomal biogenesis protein (Pyrococcus horikoshii (strain ATCC 700860 / DSM 12428 / JCM 9974 / NBRC 100139 / OT-3)).